Reading from the N-terminus, the 399-residue chain is Probable WRKY transcription factor 48 (399 aa).

Basic and acidic residues-rich tracts occupy residues 1 to 11 (MEKKKEEDHHH) and 19 to 38 (KEIK…EQKQ). Disordered regions lie at residues 1–57 (MEKK…TSSD) and 138–202 (AESS…KNQK). The segment covering 143–161 (VVNTTPTSPNSTSVSSSSN) has biased composition (low complexity). Positions 162 to 171 (EAANDNNSGK) are enriched in polar residues. Low complexity predominate over residues 184–193 (QQEQKGTKPQ). The segment at residues 215–280 (SDIDNLDDGY…YEGQHTHPFP (66 aa)) is a DNA-binding region (WRKY). Residues 361-399 (QASTSTSSSIRDHGLLQDILPSQIRSDTINTQTNEENKK) form a disordered region. The span at 383-399 (QIRSDTINTQTNEENKK) shows a compositional bias: polar residues.

It localises to the nucleus. Functionally, transcription factor. Interacts specifically with the W box (5'-(T)TGAC[CT]-3'), a frequently occurring elicitor-responsive cis-acting element. The chain is Probable WRKY transcription factor 48 (WRKY48) from Arabidopsis thaliana (Mouse-ear cress).